We begin with the raw amino-acid sequence, 465 residues long: GTPase Der (465 aa).

EngA-type G domains lie at 3 to 166 (FLVA…LNEY) and 184 to 358 (IHFS…ACAN). Residues 9 to 16 (GRANVGKS), 56 to 60 (DTGGI), 118 to 121 (NKVD), 190 to 197 (GRPNVGKS), 237 to 241 (DTAGV), and 302 to 305 (NKWD) contribute to the GTP site. A KH-like domain is found at 359–443 (KKITTADATR…PIVFEFKQSE (85 aa)). Residues 446-465 (FADRKNKRSKDEGSKSKKVK) are disordered.

The protein belongs to the TRAFAC class TrmE-Era-EngA-EngB-Septin-like GTPase superfamily. EngA (Der) GTPase family. As to quaternary structure, associates with the 50S ribosomal subunit.

Its function is as follows. GTPase that plays an essential role in the late steps of ribosome biogenesis. This chain is GTPase Der, found in Francisella tularensis subsp. holarctica (strain FTNF002-00 / FTA).